The primary structure comprises 147 residues: Phosphoribosyl-AMP cyclohydrolase 2 (147 aa).

Position 99 (D99) interacts with Mg(2+). C100 serves as a coordination point for Zn(2+). Mg(2+)-binding residues include D101 and D103. Residues C116 and C123 each contribute to the Zn(2+) site.

Belongs to the PRA-CH family. Homodimer. Mg(2+) is required as a cofactor. The cofactor is Zn(2+).

Its subcellular location is the cytoplasm. The enzyme catalyses 1-(5-phospho-beta-D-ribosyl)-5'-AMP + H2O = 1-(5-phospho-beta-D-ribosyl)-5-[(5-phospho-beta-D-ribosylamino)methylideneamino]imidazole-4-carboxamide. It functions in the pathway amino-acid biosynthesis; L-histidine biosynthesis; L-histidine from 5-phospho-alpha-D-ribose 1-diphosphate: step 3/9. Catalyzes the hydrolysis of the adenine ring of phosphoribosyl-AMP. The chain is Phosphoribosyl-AMP cyclohydrolase 2 from Pseudomonas fluorescens (strain ATCC BAA-477 / NRRL B-23932 / Pf-5).